We begin with the raw amino-acid sequence, 181 residues long: dTDP-4-dehydrorhamnose 3,5-epimerase (181 aa).

Residues R23, E28, Q47–N49, and R59 each bind substrate. H62 (proton acceptor) is an active-site residue. Substrate-binding residues include K72 and H119. Catalysis depends on Y132, which acts as the Proton donor. Residues E143 and K167 each contribute to the substrate site.

The protein belongs to the dTDP-4-dehydrorhamnose 3,5-epimerase family. As to quaternary structure, homodimer.

The catalysed reaction is dTDP-4-dehydro-6-deoxy-alpha-D-glucose = dTDP-4-dehydro-beta-L-rhamnose. Its pathway is carbohydrate biosynthesis; dTDP-L-rhamnose biosynthesis. It participates in bacterial outer membrane biogenesis; LPS O-antigen biosynthesis. Functionally, catalyzes the epimerization of the C3' and C5'positions of dTDP-6-deoxy-D-xylo-4-hexulose, forming dTDP-6-deoxy-L-lyxo-4-hexulose. In Shigella flexneri, this protein is dTDP-4-dehydrorhamnose 3,5-epimerase (rfbC).